We begin with the raw amino-acid sequence, 475 residues long: Sulfate adenylyltransferase subunit 1 (475 aa).

A tr-type G domain is found at 25–239 (KSLLRFLTCG…EVLETVEIQR (215 aa)). A G1 region spans residues 34 to 41 (GSVDDGKS). 34 to 41 (GSVDDGKS) is a binding site for GTP. The interval 92-96 (GITID) is G2. The segment at 113–116 (DTPG) is G3. Residues 113–117 (DTPGH) and 168–171 (NKMD) each bind GTP. The G4 stretch occupies residues 168–171 (NKMD). The G5 stretch occupies residues 206 to 208 (SAL).

The protein belongs to the TRAFAC class translation factor GTPase superfamily. Classic translation factor GTPase family. CysN/NodQ subfamily. Heterodimer composed of CysD, the smaller subunit, and CysN.

It catalyses the reaction sulfate + ATP + H(+) = adenosine 5'-phosphosulfate + diphosphate. It functions in the pathway sulfur metabolism; hydrogen sulfide biosynthesis; sulfite from sulfate: step 1/3. In terms of biological role, with CysD forms the ATP sulfurylase (ATPS) that catalyzes the adenylation of sulfate producing adenosine 5'-phosphosulfate (APS) and diphosphate, the first enzymatic step in sulfur assimilation pathway. APS synthesis involves the formation of a high-energy phosphoric-sulfuric acid anhydride bond driven by GTP hydrolysis by CysN coupled to ATP hydrolysis by CysD. In Escherichia coli (strain SE11), this protein is Sulfate adenylyltransferase subunit 1.